The following is a 766-amino-acid chain: Serine/threonine-protein kinase tousled-like 1 (766 aa).

Residues 1–198 (MSVQSSSGSL…PSPTALAFGD (198 aa)) form a disordered region. The span at 20–33 (STSPTPGSAAAARS) shows a compositional bias: low complexity. Thr38 is subject to Phosphothreonine. Residues 43–64 (RPREGAMDELHSLDPRRQELLE) are compositionally biased toward basic and acidic residues. 3 positions are modified to phosphoserine: Ser54, Ser77, and Ser80. Low complexity predominate over residues 68–85 (TGVATGSTGSTGSCSVGA). Over residues 87 to 103 (ASTNNESSNHSFGSLGS) the composition is skewed to polar residues. Basic and acidic residues predominate over residues 105-121 (SDKESETPEKKQSESSR). Phosphoserine is present on residues Ser134, Ser159, Ser174, and Ser176. Positions 170-192 (SPQNSHSHSTPSSSVRPNSPSPT) are enriched in low complexity. A coiled-coil region spans residues 229-280 (NQDLEKKEGRIDDLLRANCDLRRQIDDQQKLLEKYKERLNKCISMSKKLLIE). The tract at residues 344-381 (KLLGKRKPPTANNSQAPATNSEAKQRKTKAVNGAENDP) is disordered. Positions 353–365 (TANNSQAPATNSE) are enriched in polar residues. A coiled-coil region spans residues 397 to 445 (HEQEEIFKLRLGHLKKEEAEIQAELERLERVRNLHIRELKRINNEDNSQ). The 279-residue stretch at 456-734 (YLLLHLLGRG…VHQLANDPYL (279 aa)) folds into the Protein kinase domain. Residues 462–470 (LGRGGFSEV) and Lys485 contribute to the ATP site. The Proton acceptor role is filled by Asp586. Ser743 is modified (phosphoserine). The segment at 745-766 (GNLHMSGLTATPTPPSSSIITY) is disordered.

It belongs to the protein kinase superfamily. Ser/Thr protein kinase family. In terms of assembly, heterodimer with TLK2. Mg(2+) serves as cofactor. As to expression, ubiquitously expressed in all tissues examined.

It is found in the nucleus. The catalysed reaction is L-seryl-[protein] + ATP = O-phospho-L-seryl-[protein] + ADP + H(+). It catalyses the reaction L-threonyl-[protein] + ATP = O-phospho-L-threonyl-[protein] + ADP + H(+). With respect to regulation, cell-cycle regulated, maximal activity in S-phase. Inactivated by phosphorylation at Ser-743, potentially by CHEK1. Its function is as follows. Rapidly and transiently inhibited by phosphorylation following the generation of DNA double-stranded breaks during S-phase. This is cell cycle checkpoint and ATM-pathway dependent and appears to regulate processes involved in chromatin assembly. Isoform 3 protects the cells from the ionizing radiation by facilitating the repair of DSBs. In vitro, phosphorylates histone H3 at 'Ser-10'. The chain is Serine/threonine-protein kinase tousled-like 1 (Tlk1) from Mus musculus (Mouse).